Consider the following 387-residue polypeptide: Mannitol-1-phosphate 5-dehydrogenase (387 aa).

3–14 (ALHFGAGNIGRG) serves as a coordination point for NAD(+).

Belongs to the mannitol dehydrogenase family.

The catalysed reaction is D-mannitol 1-phosphate + NAD(+) = beta-D-fructose 6-phosphate + NADH + H(+). This is Mannitol-1-phosphate 5-dehydrogenase from Yersinia pseudotuberculosis serotype O:1b (strain IP 31758).